A 299-amino-acid chain; its full sequence is Methylsterol monooxygenase 1-2 (299 aa).

3 helical membrane passes run 39–59 (CHNI…LVFI), 96–116 (FILV…MIEI), and 118–138 (SGLP…YFLV). Positions 132 to 267 (LVVYFLVEDY…FTYCDYIYGT (136 aa)) constitute a Fatty acid hydroxylase domain. The short motif at 147–151 (HRFFH) is the Histidine box-1 element. Residues 160–164 (HHIHH) carry the Histidine box-2 motif. A helical membrane pass occupies residues 189–209 (TFLGPAIAPGHMITFWLWIAL). The Histidine box-3 motif lies at 239–245 (YHDYHHY).

The protein belongs to the sterol desaturase family. In terms of assembly, interacts with ACBP1. It depends on Fe cation as a cofactor. In terms of tissue distribution, expressed in embryo sacs, pollen and trichomes. Observed in leaves, roots, siliques and flowers.

It is found in the endoplasmic reticulum membrane. It carries out the reaction 4,4-dimethyl-5alpha-cholest-7-en-3beta-ol + 6 Fe(II)-[cytochrome b5] + 3 O2 + 5 H(+) = 4alpha-carboxy-4beta-methyl-5alpha-cholest-7-ene-3beta-ol + 6 Fe(III)-[cytochrome b5] + 4 H2O. The catalysed reaction is 24-methylenecycloartanol + 6 Fe(II)-[cytochrome b5] + 3 O2 + 5 H(+) = 4alpha-carboxy-4beta,14alpha-dimethyl-9beta,19-cyclo-5alpha-ergost-24(24(1))-en-3beta-ol + 6 Fe(III)-[cytochrome b5] + 4 H2O. Its function is as follows. Non-heme iron oxygenase involved in sterols biosynthesis by catalyzing the removal of the first methyl group at the C-4 position. 4,4-dimethyl-9-beta,19-cyclopropylsterols such as 24-methylenecycloartanol are the preferred substrates. Acts as a rate-limiting enzyme in the sterol pathway via interaction with ACBP1; sterols serve as lipid modulators for gene expression of homeodomain-leucine zipper IV transcription factors. Together with SMO1-1, involved in the maintenance of sterol composition to balance auxin and cytokinin activities during embryogenesis. This Arabidopsis thaliana (Mouse-ear cress) protein is Methylsterol monooxygenase 1-2.